We begin with the raw amino-acid sequence, 345 residues long: NADH-quinone oxidoreductase subunit H (345 aa).

Over 1 to 15 (MADFWATSLGQTLIL) the chain is Lumenal. The helical transmembrane segment at 16-35 (LAQGLGIIAFVMIGLLLLVW) threads the bilayer. Residues 36-86 (GDRKIWAAVQMRKGPNVVGAFGLLQSVADAAKYVFKEIVVPAGVDKPVYFL) lie on the Cytoplasmic side of the membrane. A helical transmembrane segment spans residues 87 to 106 (APMLSLVLALLAWVVVPFNE). At 107–110 (GWVM) the chain is on the lumenal side. The helical transmembrane segment at 111 to 130 (ADINVAVLFVFAVSSLEVYG) threads the bilayer. The Cytoplasmic portion of the chain corresponds to 131 to 156 (VIMGGWASNSKYPFLGSLRSAAQMIS). Residues 157–176 (YEVSMGLIIVGVIISTGSMN) form a helical membrane-spanning segment. Topologically, residues 177-191 (LSAIVEAQRGDFGLL) are lumenal. Residues 192 to 211 (NWYWLPHLPMVALFFISALA) form a helical membrane-spanning segment. The Cytoplasmic segment spans residues 212–245 (ETNRPPFDLPEAESELVAGFMVEYSSTPYLLFMA). The chain crosses the membrane as a helical span at residues 246-265 (GEYIAVWLMCALTSVLFFGG). The Lumenal portion of the chain corresponds to 266–276 (WLSPIPGVPDG). The chain crosses the membrane as a helical span at residues 277–296 (VLWMVAKMAAVFFVFAMVKA). Residues 297–313 (IVPRYRYDQLMRIGWKV) are Cytoplasmic-facing. A helical transmembrane segment spans residues 314–333 (FLPLSLAWVVVVAFLAKFEV). At 334 to 345 (LGGFWARWSIGA) the chain is on the lumenal side.

It belongs to the complex I subunit 1 family. NDH-1 is composed of 14 different subunits. Subunits NuoA, H, J, K, L, M, N constitute the membrane sector of the complex.

It is found in the cellular chromatophore membrane. The catalysed reaction is a quinone + NADH + 5 H(+)(in) = a quinol + NAD(+) + 4 H(+)(out). In terms of biological role, NDH-1 shuttles electrons from NADH, via FMN and iron-sulfur (Fe-S) centers, to quinones in the respiratory chain. The immediate electron acceptor for the enzyme in this species is believed to be ubiquinone. Couples the redox reaction to proton translocation (for every two electrons transferred, four hydrogen ions are translocated across the cytoplasmic membrane), and thus conserves the redox energy in a proton gradient. This subunit may bind ubiquinone. This Rhodobacter capsulatus (Rhodopseudomonas capsulata) protein is NADH-quinone oxidoreductase subunit H.